We begin with the raw amino-acid sequence, 113 residues long: uncharacterized protein (113 aa).

2 disordered regions span residues 1 to 22 (MGEH…PLAQ) and 90 to 113 (DGRH…SDDL). Positions 90-99 (DGRHTTESSF) are enriched in basic and acidic residues. Residues 100 to 113 (EHSSPSRSPQSDDL) show a composition bias toward low complexity.

This is an uncharacterized protein from Mycobacterium tuberculosis (strain CDC 1551 / Oshkosh).